The primary structure comprises 371 residues: Cytochrome b (371 aa).

Transmembrane regions (helical) follow at residues 25–45, 69–90, 105–125, and 170–190; these read FGSM…FLAV, WLMQ…YTHI, WLSG…GYVL, and FFAL…LHIM. 2 residues coordinate heme b: His75 and His89. Heme b is bound by residues His174 and His188. A ubiquinone is bound at residue His193. 4 consecutive transmembrane segments (helical) span residues 218-238, 280-300, 312-332, and 339-358; these read YKDM…VAFF, LGGA…PFTH, IMQF…WAAT, and FTAI…ITNP.

This sequence belongs to the cytochrome b family. In terms of assembly, the cytochrome bc1 complex contains 3 respiratory subunits (MT-CYB, CYC1 and UQCRFS1), 2 core proteins (UQCRC1 and UQCRC2) and probably 6 low-molecular weight proteins. Heme b is required as a cofactor.

It localises to the mitochondrion inner membrane. Functionally, component of the ubiquinol-cytochrome c reductase complex (complex III or cytochrome b-c1 complex) that is part of the mitochondrial respiratory chain. The b-c1 complex mediates electron transfer from ubiquinol to cytochrome c. Contributes to the generation of a proton gradient across the mitochondrial membrane that is then used for ATP synthesis. This Eryx colubrinus loveridgei protein is Cytochrome b (MT-CYB).